The chain runs to 89 residues: FMRFamide-like neuropeptides 19 (89 aa).

Positions Met1 to Gly20 are cleaved as a signal peptide. Residues Gln21–Glu67 constitute a propeptide that is removed on maturation. Phenylalanine amide is present on Phe76. The propeptide occupies Ala80–Gly89.

This sequence belongs to the FARP (FMRFamide related peptide) family. As to expression, each flp gene is expressed in a distinct set of neurons. Flp-19 is expressed in the URX interneurons, the serotonin and acetylcholine-expressing HSN neurons, and the AIN, AWA and BAG neurons.

The protein resides in the secreted. In terms of biological role, FMRFamides and FMRFamide-like peptides are neuropeptides. WANQVRF-amide inhibits the activity of dissected pharyngeal myogenic muscle system. The sequence is that of FMRFamide-like neuropeptides 19 from Caenorhabditis elegans.